Reading from the N-terminus, the 238-residue chain is Ribonuclease Rh (238 aa).

The N-terminal stretch at 1–16 is a signal peptide; the sequence is MKAVLALATLIGSTLA. 5 cysteine pairs are disulfide-bonded: C19–C36, C26–C69, C35–C136, C79–C128, and C198–C229. Residues H62, E121, and H125 contribute to the active site.

It belongs to the RNase T2 family.

It carries out the reaction a ribonucleotidyl-ribonucleotide-RNA + H2O = a 3'-end 3'-phospho-ribonucleotide-RNA + a 5'-end dephospho-ribonucleoside-RNA + H(+). This is a base non-specific ribonuclease. The chain is Ribonuclease Rh from Rhizopus niveus.